Reading from the N-terminus, the 251-residue chain is Probable transcriptional regulatory protein RSal33209_2002 (251 aa).

The protein belongs to the TACO1 family.

It is found in the cytoplasm. The polypeptide is Probable transcriptional regulatory protein RSal33209_2002 (Renibacterium salmoninarum (strain ATCC 33209 / DSM 20767 / JCM 11484 / NBRC 15589 / NCIMB 2235)).